A 189-amino-acid chain; its full sequence is Protein GrpE (189 aa).

The segment covering 1-12 (MDKKKHGSHAGA) has biased composition (basic residues). The tract at residues 1-36 (MDKKKHGSHAGAHHTDEPAAETVAPAAEGAPAAADR) is disordered. Residues 20-34 (AETVAPAAEGAPAAA) show a composition bias toward low complexity.

The protein belongs to the GrpE family. Homodimer.

It is found in the cytoplasm. Its function is as follows. Participates actively in the response to hyperosmotic and heat shock by preventing the aggregation of stress-denatured proteins, in association with DnaK and GrpE. It is the nucleotide exchange factor for DnaK and may function as a thermosensor. Unfolded proteins bind initially to DnaJ; upon interaction with the DnaJ-bound protein, DnaK hydrolyzes its bound ATP, resulting in the formation of a stable complex. GrpE releases ADP from DnaK; ATP binding to DnaK triggers the release of the substrate protein, thus completing the reaction cycle. Several rounds of ATP-dependent interactions between DnaJ, DnaK and GrpE are required for fully efficient folding. This Geobacter metallireducens (strain ATCC 53774 / DSM 7210 / GS-15) protein is Protein GrpE.